A 283-amino-acid chain; its full sequence is NAD kinase (283 aa).

Residue D68 is the Proton acceptor of the active site. NAD(+) contacts are provided by residues 68–69, 142–143, R153, D172, 183–188, and Q242; these read DG, ND, and TAYSLS.

It belongs to the NAD kinase family. The cofactor is a divalent metal cation.

Its subcellular location is the cytoplasm. It carries out the reaction NAD(+) + ATP = ADP + NADP(+) + H(+). Its function is as follows. Involved in the regulation of the intracellular balance of NAD and NADP, and is a key enzyme in the biosynthesis of NADP. Catalyzes specifically the phosphorylation on 2'-hydroxyl of the adenosine moiety of NAD to yield NADP. This is NAD kinase from Thermoanaerobacter pseudethanolicus (strain ATCC 33223 / 39E) (Clostridium thermohydrosulfuricum).